Consider the following 110-residue polypeptide: Large ribosomal subunit protein uL22 (110 aa).

It belongs to the universal ribosomal protein uL22 family. Part of the 50S ribosomal subunit.

This protein binds specifically to 23S rRNA; its binding is stimulated by other ribosomal proteins, e.g. L4, L17, and L20. It is important during the early stages of 50S assembly. It makes multiple contacts with different domains of the 23S rRNA in the assembled 50S subunit and ribosome. In terms of biological role, the globular domain of the protein is located near the polypeptide exit tunnel on the outside of the subunit, while an extended beta-hairpin is found that lines the wall of the exit tunnel in the center of the 70S ribosome. The chain is Large ribosomal subunit protein uL22 from Colwellia psychrerythraea (strain 34H / ATCC BAA-681) (Vibrio psychroerythus).